A 299-amino-acid polypeptide reads, in one-letter code: Protoheme IX farnesyltransferase (299 aa).

Transmembrane regions (helical) follow at residues 25–45 (VVLL…RAGV), 47–67 (WTVL…AAAV), 95–115 (AAAL…LLTF), 119–139 (LAAW…TGFL), 147–167 (IVIG…AVTG), 173–193 (PLLL…ALAI), 218–238 (VHIL…FAIH), 243–263 (LYLA…IALY), and 277–297 (FSIW…YLLL).

It belongs to the UbiA prenyltransferase family. Protoheme IX farnesyltransferase subfamily.

It localises to the cell inner membrane. It catalyses the reaction heme b + (2E,6E)-farnesyl diphosphate + H2O = Fe(II)-heme o + diphosphate. It participates in porphyrin-containing compound metabolism; heme O biosynthesis; heme O from protoheme: step 1/1. Functionally, converts heme B (protoheme IX) to heme O by substitution of the vinyl group on carbon 2 of heme B porphyrin ring with a hydroxyethyl farnesyl side group. The polypeptide is Protoheme IX farnesyltransferase (Stutzerimonas stutzeri (strain A1501) (Pseudomonas stutzeri)).